Consider the following 196-residue polypeptide: Probable signal peptidase I-1 (196 aa).

Residues 1–16 (MQNSPIPSPWQFIKEN) lie on the Cytoplasmic side of the membrane. A helical transmembrane segment spans residues 17-35 (IPLLMVALVLALLLRFFVA). Residues 36-196 (EPRYIPSDSM…FVPARTIINT (161 aa)) are Periplasmic-facing. Residues Ser44 and Lys94 contribute to the active site.

The protein belongs to the peptidase S26 family.

It localises to the cell membrane. The catalysed reaction is Cleavage of hydrophobic, N-terminal signal or leader sequences from secreted and periplasmic proteins.. The chain is Probable signal peptidase I-1 (lepB1) from Synechocystis sp. (strain ATCC 27184 / PCC 6803 / Kazusa).